Here is a 170-residue protein sequence, read N- to C-terminus: Ribosome maturation factor RimM (170 aa).

The PRC barrel domain maps to 98-170; that stretch reads PDEYYWVDLE…RIVVDWDPEF (73 aa).

Belongs to the RimM family. Binds ribosomal protein uS19.

It is found in the cytoplasm. Its function is as follows. An accessory protein needed during the final step in the assembly of 30S ribosomal subunit, possibly for assembly of the head region. Essential for efficient processing of 16S rRNA. May be needed both before and after RbfA during the maturation of 16S rRNA. It has affinity for free ribosomal 30S subunits but not for 70S ribosomes. In Xylella fastidiosa (strain 9a5c), this protein is Ribosome maturation factor RimM.